We begin with the raw amino-acid sequence, 115 residues long: uncharacterized protein (115 aa).

This is an uncharacterized protein from Acidianus filamentous virus 1 (isolate United States/Yellowstone) (AFV-1).